A 364-amino-acid chain; its full sequence is Lysophosphatidic acid receptor 1 (364 aa).

The Extracellular portion of the chain corresponds to 1-50 (MAAASTSSPVISQPQFTAMNEQQCFYNESIAFFYNRSGKYLATEWNTVSK). 2 disulfides stabilise this stretch: cysteine 24-cysteine 190 and cysteine 188-cysteine 195. 2 N-linked (GlcNAc...) asparagine glycosylation sites follow: asparagine 27 and asparagine 35. Residue lysine 39 participates in a 1-acyl-sn-glycero-3-phosphate binding. Residues 51 to 75 (LVMGLGITVCVFIMLANLLVMVAIY) form a helical membrane-spanning segment. Residues 76-83 (VNRRFHFP) are Cytoplasmic-facing. A helical membrane pass occupies residues 84 to 107 (IYYLMANLAAADFFAGLAYFYLMF). At 108 to 121 (NTGPNTRRLTVSTW) the chain is on the extracellular side. Residues 122 to 144 (LLRQGLIDTSLTASVANLLAIAI) traverse the membrane as a helical segment. Position 124–129 (124–129 (RQGLID)) interacts with a 1-acyl-sn-glycero-3-phosphate. Topologically, residues 145–163 (ERHITVFRMQLHTRMSNRR) are cytoplasmic. The helical transmembrane segment at 164–184 (VVVVIVVIWTMAIVMGAIPSV) threads the bilayer. At 185-204 (GWNCICDIDHCSNMAPLYSD) the chain is on the extracellular side. Residues 205–225 (SYLVFWAIFNLVTFVVMVVLY) traverse the membrane as a helical segment. An a 1-acyl-sn-glycero-3-phosphate-binding site is contributed by tryptophan 210. Residues 226–255 (AHIFGYVRQRTMRMSRHSSGPRRNRDTMMS) lie on the Cytoplasmic side of the membrane. Residues 256-280 (LLKTVVIVLGAFIVCWTPGLVLLLL) form a helical membrane-spanning segment. Over 281–294 (DVCCPQCDVLAYEK) the chain is Extracellular. Cysteine 284 and cysteine 287 are joined by a disulfide. Residues 295–315 (FFLLLAEFNSAMNPIIYSYRD) traverse the membrane as a helical segment. Residues 316–364 (KEMSATFRQILCCQRNENPNGPTEGSDRSASSLNHTILAGVHSNDHSVV) are Cytoplasmic-facing. Phosphoserine is present on serine 341. Phosphothreonine is present on threonine 351.

It belongs to the G-protein coupled receptor 1 family. In terms of assembly, interacts with RALA and GRK2. Interacts with GNAQ and GNA13. Interacts with CD14; the interaction is enhanced by exposure to bacterial lipopolysaccharide (LPS). N-glycosylated. Detected in lung. Detected in oligodendrocytes in corpus callosum in brain cortex (at protein level). Expressed within the embryonic cerebral cortex, where it is enriched in the ventricular zone. In the adult brain, also expressed in oligodendrocytes, as well as Schwann cells of the peripheral nervous system. Expressed in many other tissues, including lung, heart, intestine, spleen, thymus, and stomach. No expression in liver. Detected in kidney and testis. Detected in embryonic fibroblasts. Detected in adult lung fibroblasts and lung endothelial cells. Detected in dorsal root ganglion and dorsal root. Detected in astrocytes. Detected in bone.

It localises to the cell surface. The protein localises to the cell membrane. Its subcellular location is the endosome. Functionally, receptor for lysophosphatidic acid (LPA). Plays a role in the reorganization of the actin cytoskeleton, cell migration, differentiation and proliferation, and thereby contributes to the responses to tissue damage and infectious agents. Activates downstream signaling cascades via the G(i)/G(o), G(12)/G(13), and G(q) families of heteromeric G proteins. Signaling inhibits adenylyl cyclase activity and decreases cellular cAMP levels. Signaling triggers an increase of cytoplasmic Ca(2+) levels. Activates RALA; this leads to the activation of phospholipase C (PLC) and the formation of inositol 1,4,5-trisphosphate. Signaling mediates activation of down-stream MAP kinases. Contributes to the regulation of cell shape. Promotes Rho-dependent reorganization of the actin cytoskeleton in neuronal cells and neurite retraction. Promotes the activation of Rho and the formation of actin stress fibers. Promotes formation of lamellipodia at the leading edge of migrating cells via activation of RAC1. Through its function as LPA receptor, plays a role in chemotaxis and cell migration, including responses to injury and wounding. Plays a role in triggering inflammation in response to bacterial lipopolysaccharide (LPS) via its interaction with CD14. Promotes cell proliferation in response to LPA. Inhibits the intracellular ciliogenesis pathway in response to LPA and through AKT1 activation. Required for normal skeleton development. May play a role in osteoblast differentiation. Required for normal brain development. Required for normal proliferation, survival and maturation of newly formed neurons in the adult dentate gyrus. Plays a role in pain perception and in the initiation of neuropathic pain. In Mus musculus (Mouse), this protein is Lysophosphatidic acid receptor 1 (Lpar1).